Reading from the N-terminus, the 323-residue chain is MSKIFEDNSLTIGHTPLVRLNRIGNGRILAKVESRNPSFSVKCRIGANMIWDAEKRGVLKPGVELVEPTSGNTGIALAYVAAARGYKLTLTMPETMSIERRKLLKALGANLVLTEGAKGMKGAIQKAEEIVASNPEKYLLLQQFSNPANPEIHEKTTGPEIWEDTDGQVDVFIAGVGTGGTLTGVSRYIKGTKGKTDLISVAVEPTDSPVIAQALAGEEIKPGPHKIQGIGAGFIPANLDLKLVDKVIGITNEEAISTARRLMEEEGILAGISSGAAVAAALKLQEDESFTNKNIVVILPSSGERYLSTALFADLFTEKELQQ.

The hydrogen sulfide site is built by Asn-8 and Arg-35. Lys-42 carries the N6-(pyridoxal phosphate)lysine modification. Pyridoxal 5'-phosphate is bound by residues Asn-72 and 177–181 (GTGGT). Leu-269 contacts hydrogen sulfide. Residue Ser-273 coordinates pyridoxal 5'-phosphate.

Belongs to the cysteine synthase/cystathionine beta-synthase family. In terms of assembly, homodimer. Requires pyridoxal 5'-phosphate as cofactor.

It catalyses the reaction O-acetyl-L-serine + hydrogen sulfide = L-cysteine + acetate. The protein operates within amino-acid biosynthesis; L-cysteine biosynthesis; L-cysteine from L-serine: step 2/2. The protein is Cysteine synthase A (cysK) of Escherichia coli O157:H7.